The chain runs to 230 residues: Modulator of macroautophagy TMEM150B-A (230 aa).

Residue methionine 1 is a topological domain, cytoplasmic. A helical transmembrane segment spans residues 2 to 22; that stretch reads WAWALLPICLTIWATAGIWIV. Residues 23-50 lie on the Extracellular side of the membrane; it reads YGMSVSNGSVNLSDGFPYISLCGTDPPQ. Residues asparagine 29 and asparagine 33 are each glycosylated (N-linked (GlcNAc...) asparagine). The helical transmembrane segment at 51 to 71 threads the bilayer; that stretch reads SCVFGQVLNVGAMLGVWISAI. The Cytoplasmic portion of the chain corresponds to 72–83; that stretch reads RFQQIRDYNCHS. The helical transmembrane segment at 84–104 threads the bilayer; sequence VLNSVSLAMGILCALGTSIVG. At 105–115 the chain is on the extracellular side; that stretch reads NFQQSNQLETH. Residues 116-136 form a helical membrane-spanning segment; sequence LAGAFLAFVIGNIYFWMQTAL. The Cytoplasmic segment spans residues 137 to 150; the sequence is TYMVKPTHGGCYIG. A helical membrane pass occupies residues 151 to 171; the sequence is PIRFCLSVACTALIVLMAVFL. At 172 to 183 the chain is on the extracellular side; that stretch reads KMNMKSISAICE. Residues 184 to 204 traverse the membrane as a helical segment; the sequence is WIVAMILFLLYGLFAVDFWHL. At 205 to 230 the chain is on the cytoplasmic side; sequence DGHYFHVKKRTVIPNEMQVSTVTLSI.

Belongs to the DRAM/TMEM150 family.

The protein resides in the cell membrane. Its subcellular location is the endosome membrane. It is found in the cytoplasmic vesicle. It localises to the autophagosome membrane. Functionally, modulator of macroautophagy that causes accumulation of autophagosomes under basal conditions and enhances autophagic flux. Represses cell death and promotes long-term clonogenic survival of cells grown in the absence of glucose in a macroautophagy-independent manner. May have some role in extracellular matrix engulfment or growth factor receptor recycling, both of which can modulate cell survival. The chain is Modulator of macroautophagy TMEM150B-A from Xenopus laevis (African clawed frog).